Consider the following 388-residue polypeptide: Protein-glutamate methylesterase/protein-glutamine glutaminase 4 (388 aa).

One can recognise a Response regulatory domain in the interval 4 to 121 (KVLVVDDSGF…SGDASKIKRL (118 aa)). 4-aspartylphosphate is present on aspartate 55. Positions 137–196 (SGASAPASVPQPAKPAAPIPVREPPKPAAPVTRPAEPRAKAPPAKPEPKPEVKAAKSRRT) are disordered. Pro residues predominate over residues 148–164 (PAKPAAPIPVREPPKPA). Residues 197–388 (PRQDYKVVLI…FAPRLIDGVG (192 aa)) enclose the CheB-type methylesterase domain. Active-site residues include serine 209, histidine 236, and aspartate 332.

It belongs to the CheB family. Post-translationally, phosphorylated by CheA. Phosphorylation of the N-terminal regulatory domain activates the methylesterase activity.

Its subcellular location is the cytoplasm. It catalyses the reaction [protein]-L-glutamate 5-O-methyl ester + H2O = L-glutamyl-[protein] + methanol + H(+). It carries out the reaction L-glutaminyl-[protein] + H2O = L-glutamyl-[protein] + NH4(+). Involved in chemotaxis. Part of a chemotaxis signal transduction system that modulates chemotaxis in response to various stimuli. Catalyzes the demethylation of specific methylglutamate residues introduced into the chemoreceptors (methyl-accepting chemotaxis proteins or MCP) by CheR. Also mediates the irreversible deamidation of specific glutamine residues to glutamic acid. This Hahella chejuensis (strain KCTC 2396) protein is Protein-glutamate methylesterase/protein-glutamine glutaminase 4.